The chain runs to 285 residues: 2,3,4,5-tetrahydropyridine-2,6-dicarboxylate N-succinyltransferase (285 aa).

2 residues coordinate substrate: Arg-111 and Asp-148.

It belongs to the transferase hexapeptide repeat family. In terms of assembly, homotrimer.

It localises to the cytoplasm. It catalyses the reaction (S)-2,3,4,5-tetrahydrodipicolinate + succinyl-CoA + H2O = (S)-2-succinylamino-6-oxoheptanedioate + CoA. It participates in amino-acid biosynthesis; L-lysine biosynthesis via DAP pathway; LL-2,6-diaminopimelate from (S)-tetrahydrodipicolinate (succinylase route): step 1/3. The polypeptide is 2,3,4,5-tetrahydropyridine-2,6-dicarboxylate N-succinyltransferase (Rhizobium meliloti (strain 1021) (Ensifer meliloti)).